Here is a 205-residue protein sequence, read N- to C-terminus: GTP cyclohydrolase-2 (205 aa).

49–53 lines the GTP pocket; that stretch reads RIHSE. C54, C65, and C67 together coordinate Zn(2+). Residues Q70, 92 to 94, and T114 each bind GTP; that span reads EGR. The active-site Proton acceptor is the D126. Residue R128 is the Nucleophile of the active site. The GTP site is built by T149 and K154.

The protein belongs to the GTP cyclohydrolase II family. Zn(2+) is required as a cofactor.

The enzyme catalyses GTP + 4 H2O = 2,5-diamino-6-hydroxy-4-(5-phosphoribosylamino)-pyrimidine + formate + 2 phosphate + 3 H(+). The protein operates within cofactor biosynthesis; riboflavin biosynthesis; 5-amino-6-(D-ribitylamino)uracil from GTP: step 1/4. Catalyzes the conversion of GTP to 2,5-diamino-6-ribosylamino-4(3H)-pyrimidinone 5'-phosphate (DARP), formate and pyrophosphate. The sequence is that of GTP cyclohydrolase-2 from Shewanella piezotolerans (strain WP3 / JCM 13877).